We begin with the raw amino-acid sequence, 470 residues long: Crh-like protein UTR2 (470 aa).

Positions 1–23 (MRFSTLHFAFLATLSSIFTVVAA) are cleaved as a signal peptide. The cysteines at positions 58 and 69 are disulfide-linked. N-linked (GlcNAc...) asparagine glycans are attached at residues N65, N100, and N125. Positions 95–282 (SDYLGNSTEA…WAGGLINWDS (188 aa)) constitute a GH16 domain. E168 (nucleophile) is an active-site residue. E172 (proton donor) is an active-site residue. E172 is a binding site for chitin. N177, N194, N198, N202, N235, and N239 each carry an N-linked (GlcNAc...) asparagine glycan. W259 and T270 together coordinate chitin. Residues N314 and N327 are each glycosylated (N-linked (GlcNAc...) asparagine). A disordered region spans residues 347–446 (SDDATGFDPQ…SSGSSSQGVA (100 aa)). Composition is skewed to low complexity over residues 370 to 384 (TTITSVSGSSTITSV) and 392 to 408 (TANVPAQNTAAAAQATA). The segment covering 409-418 (KSSTGTNTYD) has biased composition (polar residues). The span at 433–446 (TDSGSSGSSSQGVA) shows a compositional bias: low complexity. Residue S440 is the site of GPI-anchor amidated serine attachment. The propeptide at 441–470 (SSQGVANSLNESVISGIFASICLGILSFFM) is removed in mature form. Residue N450 is glycosylated (N-linked (GlcNAc...) asparagine).

This sequence belongs to the glycosyl hydrolase 16 family. CRH1 subfamily. In terms of processing, the GPI-anchor is attached to the protein in the endoplasmic reticulum and serves to target the protein to the cell surface. There, the glucosamine-inositol phospholipid moiety is cleaved off and the GPI-modified mannoprotein is covalently attached via its lipidless GPI glycan remnant to the 1,6-beta-glucan of the outer cell wall layer.

Its subcellular location is the secreted. The protein localises to the cell wall. It localises to the membrane. The enzyme catalyses Random endo-hydrolysis of N-acetyl-beta-D-glucosaminide (1-&gt;4)-beta-linkages in chitin and chitodextrins.. Dual chitinase/transglycosylase that plays a role in cell wall architecture. Chitinase and transglycosylase activities are coupled. Required for the polysaccharide cross-linking at the septa and the cell wall. More specifically, transfers chitin to 1,6-beta-glucan in the cell wall. Plays an important role in fungal pathogenesis via its functions in cell wall assembly and regeneration, filamentation, and adherence to host cells. Acts as a cell surface antigen in acute candidemia patients. The chain is Crh-like protein UTR2 from Candida albicans (strain SC5314 / ATCC MYA-2876) (Yeast).